A 483-amino-acid polypeptide reads, in one-letter code: MENLEQTCASLRAQIAATEAQLAGLKRELEIAEQAAADVKAQDTTITITADEGRINGTRTWPLLSEEYKRYGRQMIVPQVGLQGQLKLRSARVLIVGAGGLGCPAALYLAGAGVGTLGLVDGDTVENSNLHRQVLHRSKNVGKFKVDSAIEYLREAHLTPQEAPSIFKDYDIILDCTDNPATRYLISDTAVLLGKPLVSASALRTEGQLMVLNYPPRPVGDKSGGPCYRCVFPKPPPANSVVSCADGGILGPVVGTMGVLQALEAIKVITSPAVNPSASPPSLLIFSAYSTPPFRTIRLRARRANCAVCSADASVTLETLKIGSTDYVFFCGVAGLEATLSPEERISPLELRKRHPKEVPQDGGSISKEPTIIDVREKVQFDICNLEHSVNIPISTILSSASNAANADANAQPSLPSWLPRELASADSTNPIYVVCRHGNDSQIAVRRLKELGLDRGGQRYVGDIQGGLRAWREQIDPDWPEY.

Residues G100, D121, 128–132 (SNLHR), K145, and 178–179 (DN) contribute to the ATP site. Zn(2+)-binding residues include C227 and C230. The active-site Glycyl thioester intermediate; for adenylyltransferase activity is C244. Zn(2+) contacts are provided by C306 and C309. The Rhodanese domain occupies 366–481 (ISKEPTIIDV…WREQIDPDWP (116 aa)). The active-site Cysteine persulfide intermediate; for sulfurtransferase activity is the C436.

The protein in the N-terminal section; belongs to the HesA/MoeB/ThiF family. UBA4 subfamily. Requires Zn(2+) as cofactor.

The protein resides in the cytoplasm. It is found in the cytosol. The enzyme catalyses [molybdopterin-synthase sulfur-carrier protein]-C-terminal Gly-Gly + ATP + H(+) = [molybdopterin-synthase sulfur-carrier protein]-C-terminal Gly-Gly-AMP + diphosphate. It catalyses the reaction [molybdopterin-synthase sulfur-carrier protein]-C-terminal Gly-Gly-AMP + S-sulfanyl-L-cysteinyl-[cysteine desulfurase] + AH2 = [molybdopterin-synthase sulfur-carrier protein]-C-terminal-Gly-aminoethanethioate + L-cysteinyl-[cysteine desulfurase] + A + AMP + 2 H(+). It participates in tRNA modification; 5-methoxycarbonylmethyl-2-thiouridine-tRNA biosynthesis. Plays a central role in 2-thiolation of mcm(5)S(2)U at tRNA wobble positions of cytosolic tRNA(Lys), tRNA(Glu) and tRNA(Gln). Also essential during biosynthesis of the molybdenum cofactor. Acts by mediating the C-terminal thiocarboxylation of sulfur carriers urm1 and mocs2a. Its N-terminus first activates urm1 and mocs2a as acyl-adenylates (-COAMP), then the persulfide sulfur on the catalytic cysteine is transferred to urm1 and mocs2a to form thiocarboxylation (-COSH) of their C-terminus. The reaction probably involves hydrogen sulfide that is generated from the persulfide intermediate and that acts as a nucleophile towards urm1 and mocs2a. Subsequently, a transient disulfide bond is formed. Does not use thiosulfate as sulfur donor; nfs1 probably acting as a sulfur donor for thiocarboxylation reactions. The sequence is that of Adenylyltransferase and sulfurtransferase uba4 from Neosartorya fischeri (strain ATCC 1020 / DSM 3700 / CBS 544.65 / FGSC A1164 / JCM 1740 / NRRL 181 / WB 181) (Aspergillus fischerianus).